The primary structure comprises 357 residues: 3-isopropylmalate dehydrogenase (357 aa).

76-89 serves as a coordination point for NAD(+); it reads GPQWDTIDPALRPE. Residues arginine 96, arginine 106, arginine 134, and aspartate 224 each contribute to the substrate site. 3 residues coordinate Mg(2+): aspartate 224, aspartate 248, and aspartate 252. 282–294 contacts NAD(+); the sequence is GSAPDIAGKGIAN.

This sequence belongs to the isocitrate and isopropylmalate dehydrogenases family. LeuB type 1 subfamily. Homodimer. Requires Mg(2+) as cofactor. Mn(2+) serves as cofactor.

The protein resides in the cytoplasm. The catalysed reaction is (2R,3S)-3-isopropylmalate + NAD(+) = 4-methyl-2-oxopentanoate + CO2 + NADH. The protein operates within amino-acid biosynthesis; L-leucine biosynthesis; L-leucine from 3-methyl-2-oxobutanoate: step 3/4. Its function is as follows. Catalyzes the oxidation of 3-carboxy-2-hydroxy-4-methylpentanoate (3-isopropylmalate) to 3-carboxy-4-methyl-2-oxopentanoate. The product decarboxylates to 4-methyl-2 oxopentanoate. This chain is 3-isopropylmalate dehydrogenase, found in Xanthomonas axonopodis pv. citri (strain 306).